Here is a 448-residue protein sequence, read N- to C-terminus: Exodeoxyribonuclease 7 large subunit (448 aa).

Belongs to the XseA family. In terms of assembly, heterooligomer composed of large and small subunits.

It localises to the cytoplasm. It carries out the reaction Exonucleolytic cleavage in either 5'- to 3'- or 3'- to 5'-direction to yield nucleoside 5'-phosphates.. In terms of biological role, bidirectionally degrades single-stranded DNA into large acid-insoluble oligonucleotides, which are then degraded further into small acid-soluble oligonucleotides. The protein is Exodeoxyribonuclease 7 large subunit of Tolumonas auensis (strain DSM 9187 / NBRC 110442 / TA 4).